Reading from the N-terminus, the 341-residue chain is tRNA N6-adenosine threonylcarbamoyltransferase (341 aa).

Histidine 115 and histidine 119 together coordinate Fe cation. Substrate-binding positions include 137–141 (IVSGG), aspartate 170, glycine 183, aspartate 187, and asparagine 276. Aspartate 304 is a binding site for Fe cation.

It belongs to the KAE1 / TsaD family. The cofactor is Fe(2+).

The protein resides in the cytoplasm. The catalysed reaction is L-threonylcarbamoyladenylate + adenosine(37) in tRNA = N(6)-L-threonylcarbamoyladenosine(37) in tRNA + AMP + H(+). Required for the formation of a threonylcarbamoyl group on adenosine at position 37 (t(6)A37) in tRNAs that read codons beginning with adenine. Is involved in the transfer of the threonylcarbamoyl moiety of threonylcarbamoyl-AMP (TC-AMP) to the N6 group of A37, together with TsaE and TsaB. TsaD likely plays a direct catalytic role in this reaction. The protein is tRNA N6-adenosine threonylcarbamoyltransferase of Staphylococcus aureus (strain MRSA252).